A 186-amino-acid chain; its full sequence is ADP-ribosylation factor-like protein 8B-A (186 aa).

The segment at residues 1-19 is an intramembrane region (note=Mediates targeting to membranes); it reads MLALINRLLDWFKSLFWKE. Residues 29-35, 71-75, and 130-133 contribute to the GTP site; these read QYSGKTT, DIGGQ, and NKRD.

Belongs to the small GTPase superfamily. Arf family.

It localises to the late endosome membrane. The protein localises to the lysosome membrane. The protein resides in the cytoplasm. Its subcellular location is the cytoskeleton. It is found in the spindle. It localises to the early endosome membrane. In terms of biological role, small GTPase which cycles between active GTP-bound and inactive GDP-bound states. In its active state, binds to a variety of effector proteins playing a key role in the regulation of lysosomal positioning which is important for nutrient sensing, natural killer cell-mediated cytotoxicity and antigen presentation. Along with its effectors, orchestrates lysosomal transport and fusion. In Danio rerio (Zebrafish), this protein is ADP-ribosylation factor-like protein 8B-A (arl8ba).